Reading from the N-terminus, the 115-residue chain is Nucleoid-associated protein Pro_0020 (115 aa).

It belongs to the YbaB/EbfC family. In terms of assembly, homodimer.

Its subcellular location is the cytoplasm. It is found in the nucleoid. Functionally, binds to DNA and alters its conformation. May be involved in regulation of gene expression, nucleoid organization and DNA protection. The sequence is that of Nucleoid-associated protein Pro_0020 from Prochlorococcus marinus (strain SARG / CCMP1375 / SS120).